The primary structure comprises 483 residues: Cobyric acid synthase (483 aa).

In terms of domain architecture, GATase cobBQ-type spans Ala-251–Phe-438. The Nucleophile role is filled by Cys-333. Residue His-430 is part of the active site.

This sequence belongs to the CobB/CobQ family. CobQ subfamily.

The protein operates within cofactor biosynthesis; adenosylcobalamin biosynthesis. Its function is as follows. Catalyzes amidations at positions B, D, E, and G on adenosylcobyrinic A,C-diamide. NH(2) groups are provided by glutamine, and one molecule of ATP is hydrogenolyzed for each amidation. This chain is Cobyric acid synthase, found in Brucella abortus (strain S19).